A 38-amino-acid polypeptide reads, in one-letter code: Large ribosomal subunit protein bL36 (38 aa).

This sequence belongs to the bacterial ribosomal protein bL36 family.

This chain is Large ribosomal subunit protein bL36, found in Roseiflexus sp. (strain RS-1).